The sequence spans 120 residues: Ragulator complex protein LAMTOR4 homolog (120 aa).

Residues 93–120 (QNGVTTTTSSSSSNSVYNDASDSGAVLA) are disordered. A compositionally biased stretch (low complexity) spans 97 to 107 (TTTTSSSSSNS).

This sequence belongs to the LAMTOR4 family. As to quaternary structure, part of the Ragulator complex composed of Lamtor3, Lamtor2, CG14184, CG14812, and Lamtor4.

Its subcellular location is the lysosome. Its function is as follows. Regulator of the TOR pathway, a signaling cascade that promotes cell growth in response to growth factors, energy levels, and amino acids. As part of the Ragulator complex, may activate the TOR signaling cascade in response to amino acids. The polypeptide is Ragulator complex protein LAMTOR4 homolog (Drosophila melanogaster (Fruit fly)).